A 340-amino-acid chain; its full sequence is Glutamyl-tRNA reductase (340 aa).

Residues 49–52 (TCNR), S108, 113–115 (ETE), and Q119 each bind substrate. The active-site Nucleophile is the C50. 188 to 193 (GAGEMS) contributes to the NADP(+) binding site.

This sequence belongs to the glutamyl-tRNA reductase family. As to quaternary structure, homodimer.

The enzyme catalyses (S)-4-amino-5-oxopentanoate + tRNA(Glu) + NADP(+) = L-glutamyl-tRNA(Glu) + NADPH + H(+). The protein operates within porphyrin-containing compound metabolism; protoporphyrin-IX biosynthesis; 5-aminolevulinate from L-glutamyl-tRNA(Glu): step 1/2. Catalyzes the NADPH-dependent reduction of glutamyl-tRNA(Glu) to glutamate 1-semialdehyde (GSA). The polypeptide is Glutamyl-tRNA reductase (Akkermansia muciniphila (strain ATCC BAA-835 / DSM 22959 / JCM 33894 / BCRC 81048 / CCUG 64013 / CIP 107961 / Muc)).